A 137-amino-acid polypeptide reads, in one-letter code: Acidic phospholipase A2 PL-I (137 aa).

The N-terminal stretch at 1 to 17 is a signal peptide; sequence AVCVSLLGASSIRPLPL. 7 cysteine pairs are disulfide-bonded: C28/C89, C44/C136, C46/C62, C61/C117, C68/C110, C78/C103, and C96/C108. Positions 45, 47, and 49 each coordinate Ca(2+). H65 is a catalytic residue. D66 serves as a coordination point for Ca(2+). The active site involves D111.

Ca(2+) is required as a cofactor. As to expression, expressed by the venom gland.

It localises to the secreted. The enzyme catalyses a 1,2-diacyl-sn-glycero-3-phosphocholine + H2O = a 1-acyl-sn-glycero-3-phosphocholine + a fatty acid + H(+). Its function is as follows. Snake venom phospholipase A2 (PLA2) that may act in the hemostasis system of the prey. Exhibits hydrolytic activities, and prefers the anionic micelles (dPPC with deoxycholate) (793 umol/mg/min) to the zwitterionic micelles (dPPC with Triton X-100) (591 umol/mg/min). PLA2 catalyzes the calcium-dependent hydrolysis of the 2-acyl groups in 3-sn-phosphoglycerides. This is Acidic phospholipase A2 PL-I from Walterinnesia aegyptia (Desert black snake).